A 411-amino-acid polypeptide reads, in one-letter code: Dual-specificity RNA methyltransferase RlmN (411 aa).

Catalysis depends on Glu-124, which acts as the Proton acceptor. The Radical SAM core domain occupies 130–379 (EEGRGTLCIS…IRTPRGRDIL (250 aa)). Cys-137 and Cys-382 form a disulfide bridge. [4Fe-4S] cluster is bound by residues Cys-144, Cys-148, and Cys-151. Residues 208–209 (GE), Ser-240, 262–264 (SLH), and Asn-339 contribute to the S-adenosyl-L-methionine site. The S-methylcysteine intermediate role is filled by Cys-382.

This sequence belongs to the radical SAM superfamily. RlmN family. Requires [4Fe-4S] cluster as cofactor.

Its subcellular location is the cytoplasm. The enzyme catalyses adenosine(2503) in 23S rRNA + 2 reduced [2Fe-2S]-[ferredoxin] + 2 S-adenosyl-L-methionine = 2-methyladenosine(2503) in 23S rRNA + 5'-deoxyadenosine + L-methionine + 2 oxidized [2Fe-2S]-[ferredoxin] + S-adenosyl-L-homocysteine. It carries out the reaction adenosine(37) in tRNA + 2 reduced [2Fe-2S]-[ferredoxin] + 2 S-adenosyl-L-methionine = 2-methyladenosine(37) in tRNA + 5'-deoxyadenosine + L-methionine + 2 oxidized [2Fe-2S]-[ferredoxin] + S-adenosyl-L-homocysteine. Functionally, specifically methylates position 2 of adenine 2503 in 23S rRNA and position 2 of adenine 37 in tRNAs. m2A2503 modification seems to play a crucial role in the proofreading step occurring at the peptidyl transferase center and thus would serve to optimize ribosomal fidelity. The polypeptide is Dual-specificity RNA methyltransferase RlmN (Sinorhizobium fredii (strain NBRC 101917 / NGR234)).